The following is a 180-amino-acid chain: Large ribosomal subunit protein uL5c (180 aa).

The protein belongs to the universal ribosomal protein uL5 family. Part of the 50S ribosomal subunit; contacts the 5S rRNA.

The protein localises to the plastid. It is found in the chloroplast. Its function is as follows. Binds 5S rRNA, forms part of the central protuberance of the 50S subunit. This is Large ribosomal subunit protein uL5c (rpl5) from Tetradesmus obliquus (Green alga).